The chain runs to 649 residues: Acetyl-coenzyme A synthetase (649 aa).

Residues 191–194 (RAGR), threonine 311, and asparagine 335 each bind CoA. Residues 387 to 389 (GEP), 411 to 416 (DTWWQT), aspartate 500, and arginine 515 contribute to the ATP site. Residue serine 523 participates in CoA binding. An ATP-binding site is contributed by arginine 526. The Mg(2+) site is built by valine 537, phenylalanine 539, and isoleucine 542. Residue arginine 584 coordinates CoA. Lysine 609 carries the N6-acetyllysine modification.

This sequence belongs to the ATP-dependent AMP-binding enzyme family. The cofactor is Mg(2+). Acetylated. Deacetylation by the SIR2-homolog deacetylase activates the enzyme.

The enzyme catalyses acetate + ATP + CoA = acetyl-CoA + AMP + diphosphate. Functionally, catalyzes the conversion of acetate into acetyl-CoA (AcCoA), an essential intermediate at the junction of anabolic and catabolic pathways. AcsA undergoes a two-step reaction. In the first half reaction, AcsA combines acetate with ATP to form acetyl-adenylate (AcAMP) intermediate. In the second half reaction, it can then transfer the acetyl group from AcAMP to the sulfhydryl group of CoA, forming the product AcCoA. This Photobacterium profundum (strain SS9) protein is Acetyl-coenzyme A synthetase.